A 268-amino-acid polypeptide reads, in one-letter code: Tryptophan synthase alpha chain (268 aa).

Active-site proton acceptor residues include glutamate 49 and aspartate 60.

This sequence belongs to the TrpA family. In terms of assembly, tetramer of two alpha and two beta chains.

The catalysed reaction is (1S,2R)-1-C-(indol-3-yl)glycerol 3-phosphate + L-serine = D-glyceraldehyde 3-phosphate + L-tryptophan + H2O. It functions in the pathway amino-acid biosynthesis; L-tryptophan biosynthesis; L-tryptophan from chorismate: step 5/5. The alpha subunit is responsible for the aldol cleavage of indoleglycerol phosphate to indole and glyceraldehyde 3-phosphate. This Salmonella choleraesuis (strain SC-B67) protein is Tryptophan synthase alpha chain.